The primary structure comprises 436 residues: F-box/LRR-repeat protein At2g40920 (436 aa).

In terms of domain architecture, F-box spans 48-98 (EYLLQNFDLDHVMEILMRFPLTSLTRFKCVSKQWSSLISSRYFCNLLYTTV). LRR repeat units lie at residues 276–301 (NCVV…IHLD) and 393–416 (YYNL…WFDK).

This Arabidopsis thaliana (Mouse-ear cress) protein is F-box/LRR-repeat protein At2g40920.